A 153-amino-acid polypeptide reads, in one-letter code: MTTPPGWKVSGQNEISRPFDILEAWFHRIVGGGNLTRERDSFGSNYVVKLGFPGSVADPIPYLRRAWLVTRYLHPQLGATYSSKSLDDLRYIIRPLDEQIWLQTTFFVEQGPSATYSSAEDAVSKYLSKSTTTAHWIPATSEFMISPTASSPL.

The protein resides in the nucleus. Functionally, transcriptional regulator that may regulate the expression of the satratoxin biosynthesis SC2 cluster, one of the 3 clusters involved in the biosynthesis of satratoxins, trichothecene mycotoxins that are associated with human food poisonings. The chain is Satratoxin biosynthesis SC2 cluster transcription factor SAT15 from Stachybotrys chartarum (strain CBS 109288 / IBT 7711) (Toxic black mold).